The chain runs to 740 residues: Catalase-peroxidase (740 aa).

Basic and acidic residues predominate over residues 1-14; the sequence is MTENHDAIVTDAKS. Positions 1–21 are disordered; it reads MTENHDAIVTDAKSEGSGGCP. Residues 108-231 constitute a cross-link (tryptophyl-tyrosyl-methioninium (Trp-Tyr) (with M-257)); that stretch reads WHSAGTYRIS…LGAVQMGLIY (124 aa). The Proton acceptor role is filled by His109. Positions 231-257 form a cross-link, tryptophyl-tyrosyl-methioninium (Tyr-Met) (with W-108); it reads YVNPEGPNGNPDPIAAARDIRETFRRM. His272 contributes to the heme b binding site.

It belongs to the peroxidase family. Peroxidase/catalase subfamily. In terms of assembly, homodimer. Heme b serves as cofactor. In terms of processing, formation of the three residue Trp-Tyr-Met cross-link is important for the catalase, but not the peroxidase activity of the enzyme.

The catalysed reaction is H2O2 + AH2 = A + 2 H2O. It catalyses the reaction 2 H2O2 = O2 + 2 H2O. In terms of biological role, bifunctional enzyme with both catalase and broad-spectrum peroxidase activity. This is Catalase-peroxidase from Streptomyces reticuli.